Here is an 816-residue protein sequence, read N- to C-terminus: Fibroblast growth factor receptor 1 (816 aa).

Residues 1-23 (MLSWRHLVFWAMLVMATLSAARP) form the signal peptide. The Extracellular segment spans residues 24 to 374 (APTLPEQVSP…VIMTSPLYLE (351 aa)). One can recognise an Ig-like C2-type 1 domain in the interval 25-118 (PTLPEQVSPK…ETTFFAVNVS (94 aa)). Cys54 and Cys100 are disulfide-bonded. Residues Asn76 and Asn116 are each glycosylated (N-linked (GlcNAc...) asparagine). The interval 118–152 (SDRIPSVEDDDDDDEKSSSEEKEAENSKPNPVAPF) is disordered. Positions 133–143 (KSSSEEKEAEN) are enriched in basic and acidic residues. Ig-like C2-type domains lie at 156-244 (PEKM…YQLD) and 253-355 (PILQ…AWLT). An intrachain disulfide couples Cys176 to Cys228. N-linked (GlcNAc...) asparagine glycosylation is found at Asn238, Asn262, Asn294, Asn315, and Asn328. Cys275 and Cys339 form a disulfide bridge. Residues 375–395 (IIIYCTGAFLISCMLVTVIIY) traverse the membrane as a helical segment. Topologically, residues 396–816 (KMKNTTKKTD…QHANGGLKKR (421 aa)) are cytoplasmic. Residue Tyr459 is modified to Phosphotyrosine; by autocatalysis. Residues 474–763 (LILGKPLGEG…VAMTSNQEYL (290 aa)) enclose the Protein kinase domain. Residues 480 to 486 (LGEGCFG), Lys510, 558 to 560 (EYA), and Asn564 contribute to the ATP site. Residues Tyr579 and Tyr581 each carry the phosphotyrosine; by autocatalysis modification. Catalysis depends on Asp619, which acts as the Proton acceptor. Residues Arg623 and Asp637 each contribute to the ATP site. Phosphotyrosine; by autocatalysis occurs at positions 649, 650, 726, and 762. Residues 776–816 (FPDTRSSTCSSGEDSVFSHDPLPDEPCLPKYQHANGGLKKR) are disordered. Polar residues predominate over residues 779–788 (TRSSTCSSGE).

Belongs to the protein kinase superfamily. Tyr protein kinase family. Fibroblast growth factor receptor subfamily. In terms of assembly, monomer. Homodimer after ligand binding. Post-translationally, autophosphorylated. Binding of FGF family members together with heparan sulfate proteoglycan or heparin promotes receptor dimerization and autophosphorylation on tyrosine residues. Autophosphorylation occurs in trans between the two FGFR molecules present in the dimer and proceeds in a highly ordered manner. Phosphotyrosine residues provide docking sites for interacting proteins and so are crucial for FGFR1 function and its regulation. Ubiquitinated. FGFR1 is rapidly ubiquitinated after autophosphorylation, leading to internalization and degradation. In terms of processing, N-glycosylated in the endoplasmic reticulum. The N-glycan chains undergo further maturation to an Endo H-resistant form in the Golgi apparatus.

It is found in the cell membrane. It localises to the nucleus. The protein localises to the cytoplasm. The protein resides in the cytosol. Its subcellular location is the cytoplasmic vesicle. The enzyme catalyses L-tyrosyl-[protein] + ATP = O-phospho-L-tyrosyl-[protein] + ADP + H(+). Its activity is regulated as follows. Present in an inactive conformation in the absence of bound ligand. Ligand binding leads to dimerization and activation by sequential autophosphorylation on tyrosine residues. Functionally, tyrosine-protein kinase that acts as a cell-surface receptor for fibroblast growth factors and plays an essential role in the regulation of embryonic development, cell proliferation, differentiation and migration. Required for normal mesoderm patterning and normal skeletogenesis. Phosphorylates PLCG1, FRS2, GAB1 and SHB. Ligand binding leads to the activation of several signaling cascades. Activation of PLCG1 leads to the production of the cellular signaling molecules diacylglycerol and inositol-1,4,5-trisphosphate. Phosphorylation of FRS2 triggers recruitment of GRB2, GAB1, PIK3R1 and SOS1, and mediates activation of RAS, MAPK1/ERK2, MAPK3/ERK1 and the MAP kinase signaling pathway, as well as of the AKT1 signaling pathway. Promotes phosphorylation of SHC1, STAT1 and PTPN11/SHP2. In the nucleus, enhances RPS6KA1 and CREB1 activity and contributes to the regulation of transcription. FGFR1 signaling is down-regulated by ubiquitination, internalization and degradation. This is Fibroblast growth factor receptor 1 (FGFR1) from Pleurodeles waltl (Iberian ribbed newt).